The following is a 47-amino-acid chain: Exoenzymes regulatory protein AepH (47 aa).

Composition is skewed to basic and acidic residues over residues 1–17 (MGQE…QDGH) and 33–47 (TKKE…DANV). Positions 1-47 (MGQEPKGIESRKIQDGHVRKKVGRQQGLWVRTTKKEKFSRMSRDANV) are disordered.

Its function is as follows. Involved in the control of extracellular enzymes production. Stimulates PEL, PEH, CEL, and PRT production. This Pectobacterium carotovorum subsp. carotovorum (Erwinia carotovora subsp. carotovora) protein is Exoenzymes regulatory protein AepH (aepH).